A 63-amino-acid chain; its full sequence is Crotasin (63 aa).

The signal sequence occupies residues 1-22; that stretch reads MKILYLLSAFLFLAFLSESGNA. 3 disulfide bridges follow: Cys26/Cys56, Cys33/Cys50, and Cys38/Cys57.

As to expression, highly expressed in pancreas, heart, liver, brain and kidney. Expressed to a low extent in the venom gland.

It is found in the secreted. The sequence is that of Crotasin from Crotalus durissus terrificus (South American rattlesnake).